Consider the following 320-residue polypeptide: Cytochrome f (320 aa).

The N-terminal stretch at 1–35 (MQTRNAFSWIKKEITRSISVLLMIYIITRAPISNA) is a signal peptide. 4 residues coordinate heme: Tyr36, Cys56, Cys59, and His60. A helical transmembrane segment spans residues 286–305 (VQGLLLFLASIILAQIFLVL).

Belongs to the cytochrome f family. The 4 large subunits of the cytochrome b6-f complex are cytochrome b6, subunit IV (17 kDa polypeptide, petD), cytochrome f and the Rieske protein, while the 4 small subunits are PetG, PetL, PetM and PetN. The complex functions as a dimer. Heme is required as a cofactor.

It localises to the plastid. The protein localises to the chloroplast thylakoid membrane. In terms of biological role, component of the cytochrome b6-f complex, which mediates electron transfer between photosystem II (PSII) and photosystem I (PSI), cyclic electron flow around PSI, and state transitions. The chain is Cytochrome f (petA) from Vicia faba (Broad bean).